The primary structure comprises 303 residues: 2-dehydropantoate 2-reductase (303 aa).

Residues 7 to 12 (GCGALG), Asn-98, and Ala-122 contribute to the NADP(+) site. Residue Asn-98 coordinates substrate. Catalysis depends on Lys-176, which acts as the Proton donor. Residues Asn-180, Asn-184, Asn-194, and Ser-244 each contribute to the substrate site. Glu-256 is a binding site for NADP(+).

It belongs to the ketopantoate reductase family. As to quaternary structure, monomer.

The protein localises to the cytoplasm. The catalysed reaction is (R)-pantoate + NADP(+) = 2-dehydropantoate + NADPH + H(+). It functions in the pathway cofactor biosynthesis; (R)-pantothenate biosynthesis; (R)-pantoate from 3-methyl-2-oxobutanoate: step 2/2. In terms of biological role, catalyzes the NADPH-dependent reduction of ketopantoate into pantoic acid. The sequence is that of 2-dehydropantoate 2-reductase (panE) from Shigella flexneri.